The chain runs to 152 residues: Urease accessory protein UreE (152 aa).

Belongs to the UreE family.

The protein localises to the cytoplasm. In terms of biological role, involved in urease metallocenter assembly. Binds nickel. Probably functions as a nickel donor during metallocenter assembly. The sequence is that of Urease accessory protein UreE from Citrobacter koseri (strain ATCC BAA-895 / CDC 4225-83 / SGSC4696).